The following is a 262-amino-acid chain: ATP synthase subunit a (262 aa).

5 helical membrane passes run 24–44, 85–105, 129–149, 194–214, and 228–248; these read AVHL…LVVF, IAPL…IDLV, DISA…FYTV, LFGN…MYMA, and LVWA…FMML.

Belongs to the ATPase A chain family. F-type ATPases have 2 components, CF(1) - the catalytic core - and CF(0) - the membrane proton channel. CF(1) has five subunits: alpha(3), beta(3), gamma(1), delta(1), epsilon(1). CF(0) has three main subunits: a(1), b(2) and c(9-12). The alpha and beta chains form an alternating ring which encloses part of the gamma chain. CF(1) is attached to CF(0) by a central stalk formed by the gamma and epsilon chains, while a peripheral stalk is formed by the delta and b chains.

Its subcellular location is the cell inner membrane. Key component of the proton channel; it plays a direct role in the translocation of protons across the membrane. This Haemophilus ducreyi (strain 35000HP / ATCC 700724) protein is ATP synthase subunit a.